A 110-amino-acid polypeptide reads, in one-letter code: DNA-binding protein PAE3044 (110 aa).

This sequence belongs to the PDCD5 family.

This is DNA-binding protein PAE3044 from Pyrobaculum aerophilum (strain ATCC 51768 / DSM 7523 / JCM 9630 / CIP 104966 / NBRC 100827 / IM2).